Consider the following 312-residue polypeptide: Putative 1-aminocyclopropane-1-carboxylate deaminase (312 aa).

Position 42 is an N6-(pyridoxal phosphate)lysine (lysine 42).

It belongs to the ACC deaminase/D-cysteine desulfhydrase family. Requires pyridoxal 5'-phosphate as cofactor.

The enzyme catalyses 1-aminocyclopropane-1-carboxylate + H2O = 2-oxobutanoate + NH4(+). The protein is Putative 1-aminocyclopropane-1-carboxylate deaminase of Thermotoga maritima (strain ATCC 43589 / DSM 3109 / JCM 10099 / NBRC 100826 / MSB8).